The primary structure comprises 317 residues: MELPIAQFPDVQANRPKIPINLTRVGVTGVKKLVEIKRKDKRPIVLISTFEIFVDLPSDRKGANLSRNFEAMDEVLEKAINLPVYEIEKLCNDVAKSLLRRHEYATRSEVRMKSEYVVKREAPSTKMKCQEVVDIFAEATATRLEDGDIDVKKLIGAEVVGMTACPCAQEIMRDNAKTALRELGVGLETVMNFLNKVPMATHNQRGRGIISLEVSGDVDVSLETIIRIIESSMSSSIVELLKRADEALVVERAHQNPKFVEDCVRTMAQNIVSEFAHVPDSALVTIKQINEESIHRHNAFAERVALLGDLRDEIKNN.

Belongs to the GTP cyclohydrolase IV family. As to quaternary structure, homodimer. It depends on Fe(2+) as a cofactor.

The catalysed reaction is GTP + H2O = 7,8-dihydroneopterin 2',3'-cyclic phosphate + formate + diphosphate + H(+). It functions in the pathway cofactor biosynthesis; 5,6,7,8-tetrahydromethanopterin biosynthesis. In terms of biological role, converts GTP to 7,8-dihydro-D-neopterin 2',3'-cyclic phosphate, the first intermediate in the biosynthesis of coenzyme methanopterin. The sequence is that of GTP cyclohydrolase MptA from Methanococcoides burtonii (strain DSM 6242 / NBRC 107633 / OCM 468 / ACE-M).